Consider the following 989-residue polypeptide: Cellulose synthase A catalytic subunit 4 [UDP-forming] (989 aa).

At 1–184 the chain is on the cytoplasmic side; it reads MMESGVPPCA…SRIIPISKNK (184 aa). 8 residues coordinate Zn(2+): cysteine 9, cysteine 12, cysteine 20, cysteine 23, cysteine 28, cysteine 31, cysteine 43, and cysteine 46. The segment at 9 to 47 adopts an RING-type; degenerate zinc-finger fold; that stretch reads CAACGDDAHAACRACSYALCKACLDEDAAEGRTTCARCG. Residues 138-149 are compositionally biased toward basic residues; sequence KKEKKASAKKAA. Residues 138–158 are disordered; the sequence is KKEKKASAKKAAAKAQAPPVE. A helical transmembrane segment spans residues 185 to 205; that stretch reads LTPYRAVIIMRLVVLGLFFHY. Topologically, residues 206–213 are extracellular; sequence RITNPVYS. The chain crosses the membrane as a helical span at residues 214-234; sequence AFGLWMTSVICEIWFGFSWIL. Topologically, residues 235–772 are cytoplasmic; the sequence is DQFPKWCPIN…INTIVYPFTS (538 aa). UDP-alpha-D-glucose is bound by residues serine 272, lysine 278, glutamate 279, and aspartate 308. The active site involves aspartate 308. The stretch at 362 to 389 forms a coiled coil; sequence VKERRAMKRDYEEYKVRINALVAKAQKT. Lysine 449 lines the UDP-alpha-D-glucose pocket. Residues lysine 450 and aspartate 474 each contribute to the Mn(2+) site. Residue aspartate 688 is part of the active site. A helical transmembrane segment spans residues 773–793; it reads LPLIAYCCLPAICLLTGKFII. The Extracellular portion of the chain corresponds to 794 to 798; that stretch reads PTLSN. A helical transmembrane segment spans residues 799-819; that stretch reads AATIWFLGLFISIIVTSVLEL. The Cytoplasmic portion of the chain corresponds to 820 to 835; it reads RWSGIGIEDWWRNEQF. The helical transmembrane segment at 836–856 threads the bilayer; the sequence is WVIGGVSAHLFAVFQGILKMI. The Extracellular portion of the chain corresponds to 857–884; sequence AGLDTNFTVTAKATDDTEFGELYVFKWT. N-linked (GlcNAc...) asparagine glycosylation is present at asparagine 862. A helical transmembrane segment spans residues 885–905; the sequence is TVLIPPTSILVLNLVGVVAGF. Residues 906–916 are Cytoplasmic-facing; it reads SDALNSGYESW. A helical membrane pass occupies residues 917–937; that stretch reads GPLFGKVFFAMWVIMHLYPFL. Residues 938–946 are Extracellular-facing; sequence KGLMGRQNR. Residues 947-967 traverse the membrane as a helical segment; it reads TPTIVVLWSVLLASVFSLLWV. Residues 968 to 989 are Cytoplasmic-facing; sequence KIDPFIGSSETTTTNSCANFDC.

Belongs to the glycosyltransferase 2 family. Plant cellulose synthase subfamily. It depends on Mn(2+) as a cofactor. Requires Zn(2+) as cofactor.

The protein localises to the cell membrane. The catalysed reaction is [(1-&gt;4)-beta-D-glucosyl](n) + UDP-alpha-D-glucose = [(1-&gt;4)-beta-D-glucosyl](n+1) + UDP + H(+). Its pathway is glycan metabolism; plant cellulose biosynthesis. In terms of biological role, catalytic subunit of cellulose synthase terminal complexes ('rosettes'), required for beta-1,4-glucan microfibril crystallization, a major mechanism of the cell wall formation. Involved in the secondary cell wall formation. This is Cellulose synthase A catalytic subunit 4 [UDP-forming] (CESA4) from Oryza sativa subsp. indica (Rice).